Consider the following 271-residue polypeptide: Zinc finger protein 501 (271 aa).

9 C2H2-type zinc fingers span residues 22–44 (SKCS…QRIH), 50–72 (YVCS…LRIH), 78–100 (YKCN…LRIH), 106–128 (YKCN…QRIH), 134–156 (YKCT…QRSH), 162–184 (FKCN…QRIH), 190–212 (YTCT…ERTH), 218–240 (YKCS…YRIH), and 246–268 (YECV…QRLH).

Belongs to the krueppel C2H2-type zinc-finger protein family.

The protein resides in the nucleus. It localises to the nucleolus. Functionally, may be involved in transcriptional regulation. Essential for Golgi structural integrity. The sequence is that of Zinc finger protein 501 (ZNF501) from Homo sapiens (Human).